The primary structure comprises 387 residues: Phosphoglycerate kinase (387 aa).

Substrate-binding positions include 21–23 (DLN), R36, 59–62 (HLGR), R113, and R146. ATP-binding positions include K197, E314, and 340–343 (GGDT).

Belongs to the phosphoglycerate kinase family. As to quaternary structure, monomer.

It is found in the cytoplasm. The enzyme catalyses (2R)-3-phosphoglycerate + ATP = (2R)-3-phospho-glyceroyl phosphate + ADP. It participates in carbohydrate degradation; glycolysis; pyruvate from D-glyceraldehyde 3-phosphate: step 2/5. The polypeptide is Phosphoglycerate kinase (Cronobacter sakazakii (strain ATCC BAA-894) (Enterobacter sakazakii)).